The primary structure comprises 244 residues: MAEFNLEALNALPKDEQVAALAAVNGQLEQLSAQERVSWALENLPGDFVLSSSFGIQAAISLHLVTQQRPDIPVILTDTGYLFPETYQFIDALTEQLKLNLHVYRAAESPAWQESRYGKLWDQGVEGIERYNLLNKVEPMNRALSELNAGTWFAGLRREQSGSRGELPVLAIQRGVFKFLPIIDWDNRTVYQYLKENGLSYHPLWDQGYLSVGDTHTTRKWEPGMSEEETRFFGLKRECGLHEG.

The active-site Nucleophile; cysteine thiosulfonate intermediate is the Cys239.

The protein belongs to the PAPS reductase family. CysH subfamily.

It is found in the cytoplasm. The enzyme catalyses [thioredoxin]-disulfide + sulfite + adenosine 3',5'-bisphosphate + 2 H(+) = [thioredoxin]-dithiol + 3'-phosphoadenylyl sulfate. It participates in sulfur metabolism; hydrogen sulfide biosynthesis; sulfite from sulfate: step 3/3. Its function is as follows. Catalyzes the formation of sulfite from phosphoadenosine 5'-phosphosulfate (PAPS) using thioredoxin as an electron donor. In Pectobacterium atrosepticum (strain SCRI 1043 / ATCC BAA-672) (Erwinia carotovora subsp. atroseptica), this protein is Phosphoadenosine 5'-phosphosulfate reductase.